Consider the following 643-residue polypeptide: NAD-dependent malic enzyme, mitochondrial (643 aa).

Residues 1–38 (PRVRSFIAHQSGITSVIRRSPDIAHRMVRSLSVSSQRN) constitute a mitochondrion transit peptide. Residues Gln-116, Arg-119, and Arg-143 each contribute to the fumarate site. Tyr-164 (proton donor) is an active-site residue. Arg-219 serves as a coordination point for (S)-malate. Arg-219 serves as a coordination point for NAD(+). The active-site Proton acceptor is Lys-237. A divalent metal cation-binding residues include Glu-309 and Asp-310. Asn-313, Asp-333, Ala-366, Ala-369, and Asn-472 together coordinate NAD(+). Asp-333 contacts a divalent metal cation. 2 residues coordinate (S)-malate: Asn-472 and Asn-516.

The protein belongs to the malic enzymes family. In terms of assembly, homotetramer. Mg(2+) serves as cofactor. The cofactor is Mn(2+).

The protein resides in the mitochondrion matrix. The catalysed reaction is (S)-malate + NAD(+) = pyruvate + CO2 + NADH. It carries out the reaction oxaloacetate + H(+) = pyruvate + CO2. With respect to regulation, subject to allosteric activation by fumarate. In terms of biological role, NAD-dependent mitochondrial malic enzyme that catalyzes the oxidative decarboxylation of malate to pyruvate. This is NAD-dependent malic enzyme, mitochondrial from Ascaris suum (Pig roundworm).